The primary structure comprises 231 residues: Aquaporin Z (231 aa).

Transmembrane regions (helical) follow at residues 9 to 29 (CFGT…AAGF) and 34 to 54 (IGFA…AFAV). An NPA 1 motif is present at residues 63–65 (NPA). Transmembrane regions (helical) follow at residues 82–102 (VGYV…LYLI), 129–149 (YSML…LLVI), and 156–176 (FAPA…IHLI). Positions 186–188 (NPA) match the NPA 2 motif. A helical transmembrane segment spans residues 202–222 (LEQLWFFWVVPIVGGIIGGLI).

The protein belongs to the MIP/aquaporin (TC 1.A.8) family. Homotetramer.

It is found in the cell inner membrane. The enzyme catalyses H2O(in) = H2O(out). In terms of biological role, channel that permits osmotically driven movement of water in both directions. It is involved in the osmoregulation and in the maintenance of cell turgor during volume expansion in rapidly growing cells. It mediates rapid entry or exit of water in response to abrupt changes in osmolarity. The sequence is that of Aquaporin Z from Escherichia coli O6:H1 (strain CFT073 / ATCC 700928 / UPEC).